The following is a 162-amino-acid chain: Interleukin-15 (162 aa).

The first 29 residues, 1–29, serve as a signal peptide directing secretion; it reads MRILKPYLRSTSIQCYLCLLLNSHFLTEA. The propeptide occupies 30 to 48; that stretch reads GIHVFILGCISAGLPKTEA. Cystine bridges form between Cys-83-Cys-133 and Cys-90-Cys-136. Residues Asn-113, Asn-121, and Asn-127 are each glycosylated (N-linked (GlcNAc...) asparagine).

The protein belongs to the IL-15/IL-21 family.

It localises to the secreted. Cytokine that plays a major role in the development of inflammatory and protective immune responses to microbial invaders and parasites by modulating immune cells of both the innate and adaptive immune systems. Stimulates the proliferation of natural killer cells, T-cells and B-cells and promotes the secretion of several cytokines. In monocytes, induces the production of IL8 and monocyte chemotactic protein 1/CCL2, two chemokines that attract neutrophils and monocytes respectively to sites of infection. Unlike most cytokines, which are secreted in soluble form, IL15 is expressed in association with its high affinity IL15RA on the surface of IL15-producing cells and delivers signals to target cells that express IL2RB and IL2RG receptor subunits. Binding to its receptor triggers the phosphorylation of JAK1 and JAK3 and the recruitment and subsequent phosphorylation of signal transducer and activator of transcription-3/STAT3 and STAT5. In mast cells, induces the rapid tyrosine phosphorylation of STAT6 and thereby controls mast cell survival and release of cytokines such as IL4. The polypeptide is Interleukin-15 (IL15) (Ovis aries (Sheep)).